Here is a 242-residue protein sequence, read N- to C-terminus: Small ribosomal subunit protein uS2 (242 aa).

It belongs to the universal ribosomal protein uS2 family.

This Shewanella halifaxensis (strain HAW-EB4) protein is Small ribosomal subunit protein uS2.